We begin with the raw amino-acid sequence, 244 residues long: tRNA (guanine-N(7)-)-methyltransferase (244 aa).

Residues 1–10 show a composition bias toward polar residues; that stretch reads MSDTPQSPAQ. The tract at residues 1 to 20 is disordered; the sequence is MSDTPQSPAQDSLAEHDEAR. Glutamate 74, glutamate 99, aspartate 126, and aspartate 149 together coordinate S-adenosyl-L-methionine. Aspartate 149 is an active-site residue. Residues lysine 153, aspartate 185, and 222–225 each bind substrate; that span reads TKFE.

This sequence belongs to the class I-like SAM-binding methyltransferase superfamily. TrmB family.

It carries out the reaction guanosine(46) in tRNA + S-adenosyl-L-methionine = N(7)-methylguanosine(46) in tRNA + S-adenosyl-L-homocysteine. It participates in tRNA modification; N(7)-methylguanine-tRNA biosynthesis. Functionally, catalyzes the formation of N(7)-methylguanine at position 46 (m7G46) in tRNA. This Pseudomonas aeruginosa (strain ATCC 15692 / DSM 22644 / CIP 104116 / JCM 14847 / LMG 12228 / 1C / PRS 101 / PAO1) protein is tRNA (guanine-N(7)-)-methyltransferase.